A 335-amino-acid polypeptide reads, in one-letter code: Glycerol-3-phosphate dehydrogenase [NAD(P)+] (335 aa).

4 residues coordinate NADPH: S10, F11, R31, and K105. Sn-glycerol 3-phosphate is bound by residues K105, G136, and S138. A140 provides a ligand contact to NADPH. 5 residues coordinate sn-glycerol 3-phosphate: K191, D244, S254, R255, and N256. K191 functions as the Proton acceptor in the catalytic mechanism. R255 lines the NADPH pocket. Residues V279 and E281 each coordinate NADPH.

It belongs to the NAD-dependent glycerol-3-phosphate dehydrogenase family.

Its subcellular location is the cytoplasm. It catalyses the reaction sn-glycerol 3-phosphate + NAD(+) = dihydroxyacetone phosphate + NADH + H(+). The catalysed reaction is sn-glycerol 3-phosphate + NADP(+) = dihydroxyacetone phosphate + NADPH + H(+). Its pathway is membrane lipid metabolism; glycerophospholipid metabolism. In terms of biological role, catalyzes the reduction of the glycolytic intermediate dihydroxyacetone phosphate (DHAP) to sn-glycerol 3-phosphate (G3P), the key precursor for phospholipid synthesis. This chain is Glycerol-3-phosphate dehydrogenase [NAD(P)+], found in Myxococcus xanthus (strain DK1622).